A 126-amino-acid polypeptide reads, in one-letter code: Aspartate 1-decarboxylase (126 aa).

The active-site Schiff-base intermediate with substrate; via pyruvic acid is Ser-25. Ser-25 is modified (pyruvic acid (Ser)). Thr-57 serves as a coordination point for substrate. Tyr-58 acts as the Proton donor in catalysis. Residue 73–75 (GAA) coordinates substrate.

Belongs to the PanD family. Heterooctamer of four alpha and four beta subunits. Pyruvate serves as cofactor. In terms of processing, is synthesized initially as an inactive proenzyme, which is activated by self-cleavage at a specific serine bond to produce a beta-subunit with a hydroxyl group at its C-terminus and an alpha-subunit with a pyruvoyl group at its N-terminus.

It is found in the cytoplasm. The enzyme catalyses L-aspartate + H(+) = beta-alanine + CO2. The protein operates within cofactor biosynthesis; (R)-pantothenate biosynthesis; beta-alanine from L-aspartate: step 1/1. Functionally, catalyzes the pyruvoyl-dependent decarboxylation of aspartate to produce beta-alanine. The polypeptide is Aspartate 1-decarboxylase (Tolumonas auensis (strain DSM 9187 / NBRC 110442 / TA 4)).